The sequence spans 790 residues: Mitochondrial intermediate peptidase (790 aa).

The transit peptide at 1 to 29 directs the protein to the mitochondrion; that stretch reads MLKRLARNNSSPWICSRCLQQSQRQRRFN. Histidine 570 provides a ligand contact to Zn(2+). Glutamate 571 is an active-site residue. Positions 574 and 577 each coordinate Zn(2+).

This sequence belongs to the peptidase M3 family. Requires Zn(2+) as cofactor.

The protein resides in the mitochondrion matrix. The catalysed reaction is Release of an N-terminal octapeptide as second stage of processing of some proteins imported into the mitochondrion.. Cleaves proteins, imported into the mitochondrion, to their mature size. While most mitochondrial precursor proteins are processed to the mature form in one step by mitochondrial processing peptidase (MPP), the sequential cleavage by MIP of an octapeptide after initial processing by MPP is a required step for a subgroup of nuclear-encoded precursor proteins destined for the matrix or the inner membrane. The chain is Mitochondrial intermediate peptidase (OCT1) from Phaeosphaeria nodorum (strain SN15 / ATCC MYA-4574 / FGSC 10173) (Glume blotch fungus).